We begin with the raw amino-acid sequence, 122 residues long: Large ribosomal subunit protein uL18 (122 aa).

Belongs to the universal ribosomal protein uL18 family. In terms of assembly, part of the 50S ribosomal subunit; part of the 5S rRNA/L5/L18/L25 subcomplex. Contacts the 5S and 23S rRNAs.

This is one of the proteins that bind and probably mediate the attachment of the 5S RNA into the large ribosomal subunit, where it forms part of the central protuberance. The sequence is that of Large ribosomal subunit protein uL18 from Prochlorococcus marinus (strain MIT 9301).